A 63-amino-acid chain; its full sequence is Transmembrane protein ZNF593OS (63 aa).

Residues 30–50 traverse the membrane as a helical segment; it reads LAGVVATVLAVLGLGGSCYAV.

It localises to the membrane. This chain is Transmembrane protein ZNF593OS, found in Homo sapiens (Human).